The primary structure comprises 290 residues: MADSKQSNRDWAADDVDADELPPTTESTDANGITTIVSWKYNADDQKVKVTRRVRRRLQVSTVTQTMAERKQWPKFGLDKGKPPGPDRKTTIIGENLHFKIAPISKIQRVEPEPETAVKAPTGKAVVCRLCSGQHYTARCPFREQLAAIDNLNADGAEEEQVVVSGTLAAKGAGETGGKYVPPSQRAGATGAGDSMFRARDELPTLRVTSLSIDAEEDDLRALFQPFAKNGKLGRANIVRDRNTRVSKGLAFVSFESKRDAEAAMAHLNGRGYDSLILEVAWSQPRGERT.

Basic and acidic residues predominate over residues 1–12 (MADSKQSNRDWA). Disordered regions lie at residues 1–30 (MADSKQSNRDWAADDVDADELPPTTESTDA) and 173–192 (AGETGGKYVPPSQRAGATGA). The RRM domain occupies 204-285 (PTLRVTSLSI…LILEVAWSQP (82 aa)).

Belongs to the eIF-3 subunit G family. Component of the eukaryotic translation initiation factor 3 (eIF-3) complex.

The protein resides in the cytoplasm. Functionally, RNA-binding component of the eukaryotic translation initiation factor 3 (eIF-3) complex, which is involved in protein synthesis of a specialized repertoire of mRNAs and, together with other initiation factors, stimulates binding of mRNA and methionyl-tRNAi to the 40S ribosome. The eIF-3 complex specifically targets and initiates translation of a subset of mRNAs involved in cell proliferation. This subunit can bind 18S rRNA. In Cryptococcus neoformans var. neoformans serotype D (strain B-3501A) (Filobasidiella neoformans), this protein is Eukaryotic translation initiation factor 3 subunit G.